A 1241-amino-acid chain; its full sequence is Anion exchange protein 2 (1241 aa).

Residues 1 to 240 (MSSAPRRPAK…RSYNLQERRR (240 aa)) form a disordered region. Topologically, residues 1–707 (MSSAPRRPAK…SDFRDALDPQ (707 aa)) are cytoplasmic. Basic and acidic residues-rich tracts occupy residues 37-49 (ELHR…RFEE) and 58-75 (GGEE…EYHR). 2 stretches are compositionally biased toward basic residues: residues 76–85 (QSSHHIHHPL) and 94–110 (RRRK…RRRP). Phosphoserine is present on residues serine 113, serine 132, serine 144, serine 170, serine 172, and serine 173. Residues 120 to 133 (TIEEGEEDEDEASE) show a composition bias toward acidic residues. Positions 141–155 (TQPSPVSTPSSVQFF) are enriched in low complexity. Position 183 is a phosphothreonine (threonine 183). Residues 189–209 (GAQAGTQVEEAEAEAVAVASG) are compositionally biased toward low complexity. Positions 210–219 (TAGGDDGGAS) are enriched in gly residues. Serine 243 carries the phosphoserine modification. Threonine 257 bears the Phosphothreonine mark. An N6-methyllysine modification is found at lysine 274. The segment at 288 to 320 (LVRKNAKGSTQSGREGREPGPTPRARPRAPHKP) is disordered. Residue serine 443 is modified to Phosphoserine. The tract at residues 449 to 471 (SLLGHHHGQGAESDPHVTEPLMG) is disordered. Transmembrane regions (helical) follow at residues 708 to 731 (CLAA…GLLG), 737 to 774 (LIGV…LLVF), 784 to 816 (SNHL…SFLV), and 826 to 847 (IFAF…VKIF). The tract at residues 708–1241 (CLAAVIFIYF…DEYNEMPMPV (534 aa)) is membrane (anion exchange). The Extracellular segment spans residues 848 to 900 (QEHPLHGCSASNSSEVDGGENMTWAGARPTLGPGNRSLAGQSGQGKPRGQPNT). N-linked (GlcNAc...) asparagine glycosylation is found at asparagine 859, asparagine 868, and asparagine 882. The helical transmembrane segment at 901 to 918 (ALLSLVLMAGTFFIAFFL) threads the bilayer. Over 919–933 (RKFKNSRFFPGRIRR) the chain is Cytoplasmic. 5 helical membrane passes run 934–954 (VIGD…DYSI), 988–1010 (PFPV…LIFM), 1036–1059 (LLLI…AATV), 1091–1136 (VTGL…IQFY), and 1163–1199 (MHLF…TVPL). The S-palmitoyl cysteine moiety is linked to residue cysteine 1173.

Belongs to the anion exchanger (TC 2.A.31) family. As to expression, expressed in the liver, stomach, kidney, prostate, thyroid and rectum. In terms of tissue distribution, expressed in the liver and kidney.

The protein localises to the apical cell membrane. Its subcellular location is the basolateral cell membrane. The enzyme catalyses hydrogencarbonate(in) + chloride(out) = hydrogencarbonate(out) + chloride(in). In terms of biological role, sodium-independent anion exchanger which mediates the electroneutral exchange of chloride for bicarbonate ions across the cell membrane. Plays an important role in osteoclast differentiation and function. Regulates bone resorption and calpain-dependent actin cytoskeleton organization in osteoclasts via anion exchange-dependent control of pH. Essential for intracellular pH regulation in CD8(+) T-cells upon CD3 stimulation, modulating CD8(+) T-cell responses. The chain is Anion exchange protein 2 (SLC4A2) from Homo sapiens (Human).